Consider the following 30-residue polypeptide: MMCPRILMKCKHDSDCLPGCVCLEHIEYCG.

Disulfide bonds link Cys3/Cys20, Cys10/Cys22, and Cys16/Cys29.

The protein belongs to the protease inhibitor I7 (squash-type serine protease inhibitor) family.

The protein resides in the secreted. In terms of biological role, inhibits trypsin. In Cucumis sativus (Cucumber), this protein is Trypsin inhibitor 4.